The chain runs to 513 residues: MNFPVLKGAGYVLVHTPDMIMHNGTTQTTEKIVNPESEYLKKLPEHLRSFEDVVAYAPNQTYIGSMTPEALGEIAMPWWTEDKKVAGADRYGKLGEIMPQDEFLALMSASDVFDLVLFEKEFIEGAKAKLAAHPVVGNLAESVNAGVELAEIEKQLSEFHAEGLYNNGKLVGCVKRAHDVDVNLNSHTMLENLAVKASGVLALANLIAKNNVNPAEVDYIIECSEEACGDMNQRGGGNFAKALAEMTGCVNATGSDMRGFCAGPTHALIAAAALVKSGVYKNVIIAAGGATAKLGMNGKDHVKKEMPILEDCLGGFAVLVSENDGVNPILRTDLVGRHTVATGSAPQAVIGSLVLSPLKAGGLKITDVDKYSVEMQNPDITKPAGAGDVPEANYKMIAALAVMGKEIERADIAAFVEKHGMVGWAPTQGHIPSGVPYIGFAISDLTEGSVNRTMIVGKGSLFLGRMTNLFDGVSIVAERNTGKVESGSSVSTEEIRKMIAESMKDFAAHLLAE.

Heterooctamer of four alpha and four beta subunits. Component of the glycine, sarcosine and betaine reductase complexes, together with proteins A and B.

The enzyme catalyses acetyl phosphate + [thioredoxin]-disulfide + NH4(+) + H2O = [thioredoxin]-dithiol + glycine + phosphate + H(+). The catalysed reaction is acetyl phosphate + methylamine + [thioredoxin]-disulfide + H2O = sarcosine + [thioredoxin]-dithiol + phosphate + H(+). It carries out the reaction acetyl phosphate + trimethylamine + [thioredoxin]-disulfide + H2O = glycine betaine + [thioredoxin]-dithiol + phosphate + H(+). In the first step of glycine, betaine and sarcosine reductases, the substrate is bound to component PB via a Schiff base intermediate. Then the PB-activated substrate is nucleophilically attacked by the selenol anion of component PA to transform it to a carboxymethylated selenoether and the respective amine. By action of component PC, acetyl phosphate is formed, leaving component PA in its oxidized state. Finally component PA becomes reduced by the thioredoxin system to start a new catalytic cycle of reductive deamination. The sequence is that of Glycine/sarcosine/betaine reductase complex component C subunit beta (grdC) from Peptoclostridium acidaminophilum (Eubacterium acidaminophilum).